Consider the following 272-residue polypeptide: Probable proteasome subunit beta type-5 (272 aa).

Residues 1 to 61 (MNSIVSKYTQ…KHCLIKMNHG (61 aa)) constitute a propeptide, removed in mature form. The Nucleophile role is filled by Thr-62.

The protein belongs to the peptidase T1B family. As to quaternary structure, the 26S proteasome consists of a 20S proteasome core and two 19S regulatory subunits. The 20S proteasome core is composed of 28 subunits that are arranged in four stacked rings, resulting in a barrel-shaped structure. The two end rings are each formed by seven alpha subunits, and the two central rings are each formed by seven beta subunits. The catalytic chamber with the active sites is on the inside of the barrel.

It localises to the cytoplasm. Its subcellular location is the nucleus. It carries out the reaction Cleavage of peptide bonds with very broad specificity.. The proteasome is a multicatalytic proteinase complex which is characterized by its ability to cleave peptides with Arg, Phe, Tyr, Leu, and Glu adjacent to the leaving group at neutral or slightly basic pH. The proteasome has an ATP-dependent proteolytic activity. The polypeptide is Probable proteasome subunit beta type-5 (pts1) (Schizosaccharomyces pombe (strain 972 / ATCC 24843) (Fission yeast)).